A 136-amino-acid chain; its full sequence is Histone H3 (136 aa).

A disordered region spans residues 1–43 (MARTKQTARKSTGGKAPRKQLASKAARKAAPSTGGVKKPHRYK). Lys-5 is modified (N6,N6,N6-trimethyllysine; alternate). Lys-5 is modified (N6,N6-dimethyllysine; alternate). Residues Lys-5 and Lys-10 each carry the N6-methyllysine; alternate modification. The residue at position 10 (Lys-10) is an N6-acetyllysine; alternate. Ser-11 is modified (phosphoserine). Position 15 is an N6,N6-dimethyllysine; alternate (Lys-15). Lys-15, Lys-19, Lys-24, Lys-28, and Lys-37 each carry N6-acetyllysine; alternate. An N6-methyllysine; alternate mark is found at Lys-19, Lys-24, Lys-28, and Lys-37. An N6,N6,N6-trimethyllysine; alternate mark is found at Lys-28 and Lys-37. 2 positions are modified to N6,N6-dimethyllysine; alternate: Lys-28 and Lys-37. 2 positions are modified to N6-acetyllysine: Lys-57 and Lys-65. Residue Lys-80 is modified to N6,N6,N6-trimethyllysine; alternate. Lys-80 bears the N6,N6-dimethyllysine; alternate mark. Lys-80 bears the N6-methyllysine; alternate mark.

The protein belongs to the histone H3 family. The nucleosome is a histone octamer containing two molecules each of H2A, H2B, H3 and H4 assembled in one H3-H4 heterotetramer and two H2A-H2B heterodimers. The octamer wraps approximately 147 bp of DNA. Post-translationally, phosphorylated to form H3S10ph. H3S10ph promotes subsequent H3K14ac formation and is required for transcriptional activation through TBP recruitment to the promoters. In terms of processing, mono-, di- and trimethylated by the COMPASS complex to form H3K4me1/2/3. H3K4me activates gene expression by regulating transcription elongation and plays a role in telomere length maintenance. H3K4me enrichment correlates with transcription levels, and occurs in a 5' to 3' gradient with H3K4me3 enrichment at the 5'-end of genes, shifting to H3K4me2 and then H3K4me1. Methylated by set2 to form H3K36me. H3K36me represses gene expression. Methylated by dot1 to form H3K79me. H3K79me is required for association of SIR proteins with telomeric regions and for telomeric silencing. The COMPASS-mediated formation of H3K4me2/3 and the dot1-mediated formation of H3K79me require H2BK123ub1. Acetylation of histone H3 leads to transcriptional activation. H3K14ac formation by gcn5 is promoted by H3S10ph. H3K14ac can also be formed by esa1. H3K56ac formation occurs predominantly in newly synthesized H3 molecules during G1, S and G2/M of the cell cycle and may be involved in DNA repair.

It is found in the nucleus. Its subcellular location is the chromosome. Its function is as follows. Core component of nucleosome. Nucleosomes wrap and compact DNA into chromatin, limiting DNA accessibility to the cellular machineries which require DNA as a template. Histones thereby play a central role in transcription regulation, DNA repair, DNA replication and chromosomal stability. DNA accessibility is regulated via a complex set of post-translational modifications of histones, also called histone code, and nucleosome remodeling. This Neosartorya fischeri (strain ATCC 1020 / DSM 3700 / CBS 544.65 / FGSC A1164 / JCM 1740 / NRRL 181 / WB 181) (Aspergillus fischerianus) protein is Histone H3 (hht1).